The sequence spans 451 residues: 1,3-beta-glucanosyltransferase PGA4 (451 aa).

An N-terminal signal peptide occupies residues 1–18 (MLFRSLVTYLSLVSSVLS). Tyr81 serves as a coordination point for (1,3-beta-D-glucosyl)n. N-linked (GlcNAc...) asparagine glycosylation occurs at Asn88. (1,3-beta-D-glucosyl)n is bound by residues 108 to 116 (NTPHSSITR), Asn151, Glu152, and Arg198. Glu152 acts as the Proton donor in catalysis. Residue Asn245 is glycosylated (N-linked (GlcNAc...) asparagine). Glu254 serves as the catalytic Nucleophile. Residue Tyr286 participates in (1,3-beta-D-glucosyl)n binding. The interval 316–336 (SQFEKTKNPSGDGGYLKSTGG) is disordered. 3 N-linked (GlcNAc...) asparagine glycosylation sites follow: Asn347, Asn394, and Asn422. Residues 395 to 427 (YTSSITASSRASPSQTSQVSSSSATSANSTSSK) are disordered. A compositionally biased stretch (low complexity) spans 396–426 (TSSITASSRASPSQTSQVSSSSATSANSTSS). Asp430 is lipidated: GPI-anchor amidated aspartate. A propeptide spans 431-451 (AAVEGAGFLSVIALAAGIALL) (removed in mature form).

This sequence belongs to the glycosyl hydrolase 72 family. The GPI-anchor is attached to the protein in the endoplasmic reticulum and serves to target the protein to the cell surface. There, the glucosamine-inositol phospholipid moiety is cleaved off and the GPI-modified mannoprotein is covalently attached via its lipidless GPI glycan remnant to the 1,6-beta-glucan of the outer cell wall layer.

Its subcellular location is the secreted. The protein resides in the cell wall. It is found in the membrane. Functionally, splits internally a 1,3-beta-glucan molecule and transfers the newly generated reducing end (the donor) to the non-reducing end of another 1,3-beta-glucan molecule (the acceptor) forming a 1,3-beta linkage, resulting in the elongation of 1,3-beta-glucan chains in the cell wall. Involved in cell wall biosynthesis and morphogenesis. Plays a key role in virulence. This is 1,3-beta-glucanosyltransferase PGA4 (PGA4) from Candida albicans (strain SC5314 / ATCC MYA-2876) (Yeast).